Reading from the N-terminus, the 116-residue chain is Large ribosomal subunit protein bL17 (116 aa).

The protein belongs to the bacterial ribosomal protein bL17 family. In terms of assembly, part of the 50S ribosomal subunit. Contacts protein L32.

This chain is Large ribosomal subunit protein bL17, found in Rippkaea orientalis (strain PCC 8801 / RF-1) (Cyanothece sp. (strain PCC 8801)).